The sequence spans 207 residues: MSTQSTHPLKPEAPRLPPGIPESPSCQRRHTLPASEFRCLTPEDAVSAFEIEREAFISVLGVCPLYLDEIRHFLTLCPELSLGWFEEGCLVAFIIGSLWDKERLMQESLTLHRSGGHIAHLHVLAVHRAFRQQGRGPILLWRYLHHLGSQPAVRRAALMCEDALVPFYERFSFHAVGPCAITVGSLTFMELHCSLRGHPFLRRNSGC.

The disordered stretch occupies residues 1 to 28; it reads MSTQSTHPLKPEAPRLPPGIPESPSCQR. Thr31 carries the phosphothreonine; by PKA modification. Residues 35–194 form the N-acetyltransferase domain; the sequence is SEFRCLTPED…SLTFMELHCS (160 aa). Leu124 serves as a coordination point for substrate. Residues 124–126 and 132–137 each bind acetyl-CoA; these read LAV and QQGRGP. Residue Met159 participates in substrate binding. Acetyl-CoA is bound at residue 168-170; sequence YER. Ser205 bears the Phosphoserine mark.

It belongs to the acetyltransferase family. AANAT subfamily. In terms of assembly, monomer. Interacts with several 14-3-3 proteins, including YWHAB, YWHAE, YWHAG and YWHAZ, preferentially when phosphorylated at Thr-31. Phosphorylation on Ser-205 also allows binding to YWHAZ, but with lower affinity. The interaction with YWHAZ considerably increases affinity for arylalkylamines and acetyl-CoA and protects the enzyme from dephosphorylation and proteasomal degradation. It may also prevent thiol-dependent inactivation. CAMP-dependent phosphorylation on both N-terminal Thr-31 and C-terminal Ser-205 regulates AANAT activity by promoting interaction with 14-3-3 proteins. As to expression, highly expressed in pineal gland and at lower levels in the retina. Weak expression in several brain regions and in the pituitary gland.

It localises to the cytoplasm. The enzyme catalyses a 2-arylethylamine + acetyl-CoA = an N-acetyl-2-arylethylamine + CoA + H(+). It participates in aromatic compound metabolism; melatonin biosynthesis; melatonin from serotonin: step 1/2. Controls the night/day rhythm of melatonin production in the pineal gland. Catalyzes the N-acetylation of serotonin into N-acetylserotonin, the penultimate step in the synthesis of melatonin. The chain is Serotonin N-acetyltransferase (AANAT) from Homo sapiens (Human).